Reading from the N-terminus, the 449-residue chain is Clusterin (449 aa).

An N-terminal signal peptide occupies residues 1–22; sequence MMKTLLLFVGLLLTWESGQVLG. A Nuclear localization signal motif is present at residues 78-81; the sequence is KKKK. N-linked (GlcNAc...) (complex) asparagine glycosylation is present at Asn-86. Cystine bridges form between Cys-102–Cys-313, Cys-113–Cys-305, Cys-116–Cys-302, Cys-121–Cys-295, and Cys-129–Cys-285. N-linked (GlcNAc...) asparagine glycosylation is present at Asn-103. The residue at position 133 (Ser-133) is a Phosphoserine. 3 N-linked (GlcNAc...) asparagine glycosylation sites follow: Asn-145, Asn-291, and Asn-354. The N-linked (GlcNAc...) (complex) asparagine glycan is linked to Asn-374. Ser-396 carries the post-translational modification Phosphoserine. Residues 443–447 carry the Nuclear localization signal motif; the sequence is RKKHR.

This sequence belongs to the clusterin family. As to quaternary structure, antiparallel disulfide-linked heterodimer of an alpha chain and a beta chain. Self-associates and forms higher oligomers. Interacts with a broad range of misfolded proteins, including APP, APOC2 and LYZ. Slightly acidic pH promotes interaction with misfolded proteins. Forms high-molecular weight oligomers upon interaction with misfolded proteins. Interacts with APOA1, LRP2, CLUAP1 and PON1. Interacts with the complement membrane attack complex. Interacts (via alpha chain) with XRCC6. Interacts with SYVN1, COMMD1, BTRC, CUL1 and with ubiquitin and SCF (SKP1-CUL1-F-box protein) E3 ubiquitin-protein ligase complexes. Interacts (via alpha chain) with BAX in stressed cells, where BAX undergoes a conformation change leading to association with the mitochondrial membrane. Does not interact with BAX in unstressed cells. Found in a complex with LTF, CLU, EPPIN and SEMG1. Interacts (immaturely glycosylated pre-secreted form) with HSPA5; this interaction promotes CLU stability and facilitates stress-induced CLU retrotranslocation from the secretory pathway to the mitochondria, thereby reducing stress-induced apoptosis by stabilizing mitochondrial membrane integrity. Interacts (isoform 4) with BCL2L1; this interaction releases and activates BAX and promotes cell death. Interacts with TGFBR2 and ACVR1. Interacts (secreted form) with STMN3; this interaction may act as an important modulator during neuronal differentiation. Interacts with VLDLR and LRP8. Proteolytically cleaved on its way through the secretory system, probably within the Golgi lumen. Proteolytic cleavage is not necessary for its chaperone activity. All non-secreted forms are not proteolytically cleaved. Chaperone activity of uncleaved forms is dependent on a non-reducing environment. In terms of processing, polyubiquitinated, leading to proteasomal degradation. Under cellular stress, the intracellular level of cleaved form is reduced due to proteasomal degradation. Post-translationally, extensively glycosylated with sulfated N-linked carbohydrates. About 30% of the protein mass is comprised of complex N-linked carbohydrate. Endoplasmic reticulum (ER) stress induces changes in glycosylation status and increases level of hypoglycosylated forms. Core carbohydrates are essential for chaperone activity. Non-secreted forms are hypoglycosylated or unglycosylated. Detected in blood plasma, cerebrospinal fluid, milk, seminal plasma and colon mucosa. Detected in the germinal center of colon lymphoid nodules and in colon parasympathetic ganglia of the Auerbach plexus (at protein level). Ubiquitous. Detected in brain, testis, ovary, liver and pancreas, and at lower levels in kidney, heart, spleen and lung.

The protein resides in the secreted. The protein localises to the cytoplasm. Its subcellular location is the nucleus. It is found in the mitochondrion membrane. It localises to the cytosol. The protein resides in the microsome. The protein localises to the endoplasmic reticulum. Its subcellular location is the mitochondrion. It is found in the perinuclear region. It localises to the cytoplasmic vesicle. The protein resides in the secretory vesicle. The protein localises to the chromaffin granule. In terms of biological role, functions as extracellular chaperone that prevents aggregation of non native proteins. Prevents stress-induced aggregation of blood plasma proteins. Inhibits formation of amyloid fibrils by APP, APOC2, B2M, CALCA, CSN3, SNCA and aggregation-prone LYZ variants (in vitro). Does not require ATP. Maintains partially unfolded proteins in a state appropriate for subsequent refolding by other chaperones, such as HSPA8/HSC70. Does not refold proteins by itself. Binding to cell surface receptors triggers internalization of the chaperone-client complex and subsequent lysosomal or proteasomal degradation. Protects cells against apoptosis and against cytolysis by complement: inhibits assembly of the complement membrane attack complex (MAC) by preventing polymerization of C9 pore component of the MAC complex. Intracellular forms interact with ubiquitin and SCF (SKP1-CUL1-F-box protein) E3 ubiquitin-protein ligase complexes and promote the ubiquitination and subsequent proteasomal degradation of target proteins. Promotes proteasomal degradation of COMMD1 and IKBKB. Modulates NF-kappa-B transcriptional activity. A mitochondrial form suppresses BAX-dependent release of cytochrome c into the cytoplasm and inhibit apoptosis. Plays a role in the regulation of cell proliferation. An intracellular form suppresses stress-induced apoptosis by stabilizing mitochondrial membrane integrity through interaction with HSPA5. Secreted form does not affect caspase or BAX-mediated intrinsic apoptosis and TNF-induced NF-kappa-B-activity. Secreted form act as an important modulator during neuronal differentiation through interaction with STMN3. Plays a role in the clearance of immune complexes that arise during cell injury. Functionally, does not affect caspase or BAX-mediated intrinsic apoptosis and TNF-induced NF-kappa-B-activity. Does not affect caspase or BAX-mediated intrinsic apoptosis and TNF-induced NF-kappa-B-activity. Promotes cell death through interaction with BCL2L1 that releases and activates BAX. The protein is Clusterin of Homo sapiens (Human).